Reading from the N-terminus, the 1228-residue chain is MHEHKAELRLITVALNEASTDSPSFRASVNYFHTRMESLSSWMHSTVDYVENTYKPSFQDFQRIKETLFSQLLPSPILLSNGFVSNQPYTPLLVRDFTRDVSDLSNTVMKIILGDENSQYTAALSALSSDAINPYFNKRKTFEYYQRKYDSFLTDFLAATNDGNTLIPQNLQNETFKLVDIKHKYIEASLDLTEAISLMKVNLDKFLIETIDIVRKNNVITTKDTKDVIDITPELTETLKDWTDWIESNLQTLQALSSKLSEAKYAILKLSLARMKPSRLIQDYDLKSIQNLKFNLPKSISNGNNSEEKGLSGWLYMKTTVGHDPKRVVWVRRWCFLQNNVFGVFSLSPSKTYVEETDKFGILWITVEYLPKEPRNFCFKLRIQNPNCKTEEENTYIDIILQAESIDELKSWINTLTSHKRIALSIKEENDPRYQLARKKIEPQFFEFASSSSTSTDKLLTSFSSKTLTLVEELKKNYMSEDDIYSIIDNKAYHLRVISTPIATQLTHLALFSTFLSVSNYYPCATQANTWGTANWNDLSYLVNPLKGSSVHKPATVSNSSRFSVSYPDYYPYSLKVDDIQFRSIFFSVNHDFLQVPKELVLLRYSSVWCPNNKQKFASMAFVTLNHIYVYLNISGFSYLRRIDLLDIDSIEYDKSPKHVSSRMLHMQRGDGLRFNMSVFFTDRRAVASKLQFLIENKAMHIPKGEKEVLEIFQELDEEIENEKKIIKDNLSESEHYSKDYDYLLKSTYDHHFENTNETPMELMSRKLRLEREAWCYFQDNFKVGSKTLFHVLFGDKSQVFPSSLFLCKKGSNLNNNSYWERIRRAKEDASCQFELCRKLQFQLNRTSNFIKDLLWLKDDNDNFKLVLQQRVTKIKQGYYFEVEEGPIIVKFPLCHPLLLRVRFIIAECITSQGESLKKCDLAILYDFNYVESIDKLNTKVEKLWLFERIHLNWALRYCKLEHSEINRKTREYLKKFNDREKMSDVIKLCGFLGVLPKERIENDEKAGDFMQPVYINYDFLSLSKIFTKLTVFYLSSVIIKTMKVLLAMVMVIFKCFSKVNKTLYYCLLISAVTNLFFVGKSIHSYFSVKSAETLFQNYANGDQRGLQIMHRSLTVPDLNLLTRKMMDNDQENPVFKRFDEDKNAYQYKGTRQEIAIKRNQVLTELKILQNTEKELVQGSYRKFIITERDKCITTQNEIFDLWINDTKLQDYCMACFAEYNRLSAIPV.

Topologically, residues 1-1062 (MHEHKAELRL…IFKCFSKVNK (1062 aa)) are cytoplasmic. The PH domain occupies 308 to 421 (EKGLSGWLYM…WINTLTSHKR (114 aa)). The region spanning 773 to 978 (EAWCYFQDNF…KTREYLKKFN (206 aa)) is the VASt domain. Residues 1063-1083 (TLYYCLLISAVTNLFFVGKSI) form a helical membrane-spanning segment. At 1084-1228 (HSYFSVKSAE…EYNRLSAIPV (145 aa)) the chain is on the lumenal side. Asparagine 1205 is a glycosylation site (N-linked (GlcNAc...) asparagine).

This sequence belongs to the SIP3 family.

Its subcellular location is the mitochondrion membrane. It is found in the endoplasmic reticulum membrane. In terms of biological role, involved in mitochondrial fragmentation during programmed cell death in response to high levels of alpha-factor mating pheromone or the drug amiodarone. May be involved in sterol transfer between intracellular membranes. The sequence is that of Membrane-anchored lipid-binding protein LAM1 from Saccharomyces cerevisiae (strain ATCC 204508 / S288c) (Baker's yeast).